Consider the following 313-residue polypeptide: Putative S-adenosyl-L-methionine-dependent methyltransferase MAP_3563 (313 aa).

S-adenosyl-L-methionine-binding positions include aspartate 139 and 168–169 (DL).

This sequence belongs to the UPF0677 family.

In terms of biological role, exhibits S-adenosyl-L-methionine-dependent methyltransferase activity. The sequence is that of Putative S-adenosyl-L-methionine-dependent methyltransferase MAP_3563 from Mycolicibacterium paratuberculosis (strain ATCC BAA-968 / K-10) (Mycobacterium paratuberculosis).